A 151-amino-acid chain; its full sequence is Melatonin receptor type 1C (151 aa).

Over 1–13 (CHSLRYDRLYSRR) the chain is Cytoplasmic. A helical transmembrane segment spans residues 14 to 34 (NTCLYLLLTWMLTALATVPNF). Residues 35-58 (LVGSLKYDPRVFSCTFTQTASSSY) are Extracellular-facing. The chain crosses the membrane as a helical span at residues 59 to 79 (TVCVVLIHFLVPLGVVSFCYL). Over 80–109 (RIWTLVIRVKGRVRPNPKVRAADLRNFLTM) the chain is Cytoplasmic. The chain crosses the membrane as a helical span at residues 110–130 (FVVFVLFAVCWAPLNFIGLAV). Residues 131–143 (AINPAKVAPNIPE) lie on the Extracellular side of the membrane. A helical transmembrane segment spans residues 144–151 (WLFVTSYF).

This sequence belongs to the G-protein coupled receptor 1 family.

The protein resides in the cell membrane. High affinity receptor for melatonin. The activity of this receptor is mediated by pertussis toxin sensitive G proteins that inhibits adenylate cyclase activity. This is Melatonin receptor type 1C (mtnr1c) from Danio rerio (Zebrafish).